We begin with the raw amino-acid sequence, 538 residues long: Non-specific phospholipase C4 (538 aa).

A disordered region spans residues 91-112; sequence KPWDSGKPDPNPGHPNMSGFAQ.

Belongs to the bacterial phospholipase C family. As to expression, expressed in root tips, cotyledons, on leaf margins, stems, young anthers and funiculus.

It localises to the cell membrane. The catalysed reaction is a 1,2-diacyl-sn-glycero-3-phosphocholine + H2O = phosphocholine + a 1,2-diacyl-sn-glycerol + H(+). Non-specific phospholipase C (PLC) which assumes major PLC activity during inorganic phosphate starvation. Substrate preference is phosphatidylcholine (PC), but can also hydrolyze phosphatidylethanolamine (PE) with lower efficiency. Has no activity toward phosphatidic acid (PA). Plays an important role in the supply of both inorganic phosphate and diacylglycerol from membrane-localized phospholipids during phosphate deprivation. May be required for lipid-derived signaling molecules that positively modulate abscisic acid (ABA) response and promote plant tolerance to drought and salt stresses. May be involved in brassinolide-mediated signaling in root development. In Arabidopsis thaliana (Mouse-ear cress), this protein is Non-specific phospholipase C4 (NPC4).